The sequence spans 239 residues: MESVVQPSVFVVDGQTDIPFRRLEQNHRRRRCGTVQVSLALVLLLGAGLATQGWFLLRLHQRLGDIVAHLPDGGKGSWEKLIQDQRSHQANPAAHLTGANASLIGIGGPLLWETRLGLAFLRGLTYHDGALVTMEPGYYYVYSKVQLSGVGCPQGLANGLPITHGLYKRTSRYPKELELLVSRRSPCGRANSSRVWWDSSFLGGVVHLEAGEEVVVRVPGNRLVRPRDGTRSYFGAFMV.

Over Met-1–Val-37 the chain is Cytoplasmic. The chain crosses the membrane as a helical; Signal-anchor for type II membrane protein span at residues Ser-38–Arg-58. Topologically, residues Leu-59 to Val-239 are extracellular. One can recognise a THD domain in the interval Pro-92 to Val-239. Asn-100 carries an N-linked (GlcNAc...) asparagine glycan. A disulfide bond links Cys-152 and Cys-187. Residue Asn-191 is glycosylated (N-linked (GlcNAc...) asparagine).

This sequence belongs to the tumor necrosis factor family. As to quaternary structure, homotrimer. Interacts with TNFRSF14. Post-translationally, the soluble form derives from the membrane form by proteolytic processing.

It localises to the cell membrane. It is found in the secreted. Its function is as follows. Cytokine that binds to TNFRSF3/LTBR. Binding to the decoy receptor TNFRSF6B modulates its effects. Activates NFKB and stimulates the proliferation of T-cells. Acts as a ligand for TNFRSF14/HVEM. Upon binding to TNFRSF14/HVEM, delivers costimulatory signals to T cells, leading to T cell proliferation and IFNG production. In Mus musculus (Mouse), this protein is Tumor necrosis factor ligand superfamily member 14 (Tnfsf14).